Reading from the N-terminus, the 274-residue chain is Dermonecrotic toxin SaSicTox-betaIIB1 (274 aa).

Residue His5 is part of the active site. Mg(2+)-binding residues include Glu25 and Asp27. His41 (nucleophile) is an active-site residue. 2 disulfides stabilise this stretch: Cys45–Cys51 and Cys47–Cys190. Asp85 serves as a coordination point for Mg(2+).

Belongs to the arthropod phospholipase D family. Class II subfamily. Mg(2+) serves as cofactor. Expressed by the venom gland.

The protein resides in the secreted. It catalyses the reaction an N-(acyl)-sphingosylphosphocholine = an N-(acyl)-sphingosyl-1,3-cyclic phosphate + choline. It carries out the reaction an N-(acyl)-sphingosylphosphoethanolamine = an N-(acyl)-sphingosyl-1,3-cyclic phosphate + ethanolamine. The enzyme catalyses a 1-acyl-sn-glycero-3-phosphocholine = a 1-acyl-sn-glycero-2,3-cyclic phosphate + choline. The catalysed reaction is a 1-acyl-sn-glycero-3-phosphoethanolamine = a 1-acyl-sn-glycero-2,3-cyclic phosphate + ethanolamine. Its function is as follows. Dermonecrotic toxins cleave the phosphodiester linkage between the phosphate and headgroup of certain phospholipids (sphingolipid and lysolipid substrates), forming an alcohol (often choline) and a cyclic phosphate. This toxin acts on sphingomyelin (SM). It may also act on ceramide phosphoethanolamine (CPE), lysophosphatidylcholine (LPC) and lysophosphatidylethanolamine (LPE), but not on lysophosphatidylserine (LPS), and lysophosphatidylglycerol (LPG). It acts by transphosphatidylation, releasing exclusively cyclic phosphate products as second products. Induces dermonecrosis, hemolysis, increased vascular permeability, edema, inflammatory response, and platelet aggregation. The polypeptide is Dermonecrotic toxin SaSicTox-betaIIB1 (Sicarius albospinosus (Six-eyed crab spider)).